Here is a 314-residue protein sequence, read N- to C-terminus: RNA 2',3'-cyclic phosphodiesterase (314 aa).

H43 acts as the Proton donor in catalysis. Short sequence motifs (HXTX) lie at residues 43–46 (HITL) and 129–132 (HITI). H129 serves as the catalytic Proton acceptor.

The protein belongs to the 2H phosphoesterase superfamily. ThpR family.

The catalysed reaction is a 3'-end 2',3'-cyclophospho-ribonucleotide-RNA + H2O = a 3'-end 2'-phospho-ribonucleotide-RNA + H(+). In terms of biological role, hydrolyzes RNA 2',3'-cyclic phosphodiester to an RNA 2'-phosphomonoester. The polypeptide is RNA 2',3'-cyclic phosphodiesterase (Geobacillus stearothermophilus (Bacillus stearothermophilus)).